A 164-amino-acid polypeptide reads, in one-letter code: S-ribosylhomocysteine lyase (164 aa).

Residues H54, H58, and C128 each coordinate Fe cation.

The protein belongs to the LuxS family. Homodimer. Requires Fe cation as cofactor.

The enzyme catalyses S-(5-deoxy-D-ribos-5-yl)-L-homocysteine = (S)-4,5-dihydroxypentane-2,3-dione + L-homocysteine. Its function is as follows. Involved in the synthesis of autoinducer 2 (AI-2) which is secreted by bacteria and is used to communicate both the cell density and the metabolic potential of the environment. The regulation of gene expression in response to changes in cell density is called quorum sensing. Catalyzes the transformation of S-ribosylhomocysteine (RHC) to homocysteine (HC) and 4,5-dihydroxy-2,3-pentadione (DPD). The polypeptide is S-ribosylhomocysteine lyase (Campylobacter jejuni subsp. jejuni serotype O:2 (strain ATCC 700819 / NCTC 11168)).